We begin with the raw amino-acid sequence, 602 residues long: Elongation factor 4 (602 aa).

Positions 7-189 constitute a tr-type G domain; that stretch reads KYIRNFCIIA…KIVDMIPCPE (183 aa). GTP contacts are provided by residues 19–24 and 136–139; these read DHGKST and NKID.

Belongs to the TRAFAC class translation factor GTPase superfamily. Classic translation factor GTPase family. LepA subfamily.

The protein localises to the cell membrane. The catalysed reaction is GTP + H2O = GDP + phosphate + H(+). Functionally, required for accurate and efficient protein synthesis under certain stress conditions. May act as a fidelity factor of the translation reaction, by catalyzing a one-codon backward translocation of tRNAs on improperly translocated ribosomes. Back-translocation proceeds from a post-translocation (POST) complex to a pre-translocation (PRE) complex, thus giving elongation factor G a second chance to translocate the tRNAs correctly. Binds to ribosomes in a GTP-dependent manner. The protein is Elongation factor 4 of Ruminiclostridium cellulolyticum (strain ATCC 35319 / DSM 5812 / JCM 6584 / H10) (Clostridium cellulolyticum).